The following is a 463-amino-acid chain: Zinc finger protein PLAGL1 (463 aa).

7 consecutive C2H2-type zinc fingers follow at residues 4-26 (YPCQ…NYSH), 32-56 (YKCL…MATH), 62-84 (HQCA…LQTH), 91-113 (FGCE…LALH), 120-142 (LTCG…LKAH), 156-178 (HQCD…LVVH), and 184-207 (FLCQ…KKTH). The disordered stretch occupies residues 285–310 (LHPVAPPTSPPQPLQNHKYNTSSTSY). Positions 287–297 (PVAPPTSPPQP) are enriched in pro residues. Positions 298 to 310 (LQNHKYNTSSTSY) are enriched in polar residues.

Belongs to the krueppel C2H2-type zinc-finger protein family. Interacts with THRSP.

It localises to the nucleus. Acts as a transcriptional activator. Involved in the transcriptional regulation of type 1 receptor for pituitary adenylate cyclase-activating polypeptide. The protein is Zinc finger protein PLAGL1 (PLAGL1) of Sus scrofa (Pig).